The primary structure comprises 215 residues: Pyrrolidone-carboxylate peptidase (215 aa).

Active-site residues include glutamate 80, cysteine 143, and histidine 167.

The protein belongs to the peptidase C15 family. In terms of assembly, homotetramer.

The protein resides in the cytoplasm. It catalyses the reaction Release of an N-terminal pyroglutamyl group from a polypeptide, the second amino acid generally not being Pro.. In terms of biological role, removes 5-oxoproline from various penultimate amino acid residues except L-proline. This Yersinia pseudotuberculosis serotype O:1b (strain IP 31758) protein is Pyrrolidone-carboxylate peptidase.